The following is a 565-amino-acid chain: NAD-dependent malic enzyme (565 aa).

The active-site Proton donor is tyrosine 104. Arginine 157 is a binding site for NAD(+). The active-site Proton acceptor is lysine 175. Glutamate 246, aspartate 247, and aspartate 270 together coordinate a divalent metal cation. NAD(+)-binding residues include aspartate 270 and asparagine 418.

This sequence belongs to the malic enzymes family. Homotetramer. It depends on Mg(2+) as a cofactor. The cofactor is Mn(2+).

The enzyme catalyses (S)-malate + NAD(+) = pyruvate + CO2 + NADH. The catalysed reaction is oxaloacetate + H(+) = pyruvate + CO2. This chain is NAD-dependent malic enzyme, found in Salmonella agona (strain SL483).